The chain runs to 632 residues: Extracellular metalloproteinase 2 (632 aa).

The first 19 residues, 1-19, serve as a signal peptide directing secretion; that stretch reads MHGLLLAGLAVALPLGVAG. Positions 20-244 are excised as a propeptide; the sequence is HPARPQTALS…VHNVVDYVAS (225 aa). Asn-270 carries N-linked (GlcNAc...) asparagine glycosylation. Residues 294–310 are compositionally biased toward polar residues; sequence NNVAAQDNPSGGSQWEN. A disordered region spans residues 294–313; sequence NNVAAQDNPSGGSQWENNYR. His-429 is a Zn(2+) binding site. Glu-430 is a catalytic residue. Residue His-433 participates in Zn(2+) binding.

This sequence belongs to the peptidase M36 family. Zn(2+) serves as cofactor.

Its subcellular location is the secreted. In terms of biological role, secreted metalloproteinase probably acting as a virulence factor. The sequence is that of Extracellular metalloproteinase 2 (MEP2) from Arthroderma otae (Microsporum canis).